Reading from the N-terminus, the 697-residue chain is Elongation factor G (697 aa).

The tr-type G domain occupies 8–283 (EHIRNIGICA…AVVDFLPSPT (276 aa)). GTP-binding positions include 17-24 (AHIDAGKT), 81-85 (DTPGH), and 135-138 (NKMD).

The protein belongs to the TRAFAC class translation factor GTPase superfamily. Classic translation factor GTPase family. EF-G/EF-2 subfamily.

The protein resides in the cytoplasm. Functionally, catalyzes the GTP-dependent ribosomal translocation step during translation elongation. During this step, the ribosome changes from the pre-translocational (PRE) to the post-translocational (POST) state as the newly formed A-site-bound peptidyl-tRNA and P-site-bound deacylated tRNA move to the P and E sites, respectively. Catalyzes the coordinated movement of the two tRNA molecules, the mRNA and conformational changes in the ribosome. The chain is Elongation factor G from Rickettsia rhipicephali.